A 743-amino-acid polypeptide reads, in one-letter code: Polyribonucleotide nucleotidyltransferase (743 aa).

Mg(2+)-binding residues include Asp-494 and Asp-500. A KH domain is found at 561 to 620 (PQHAEVFVNPDIIRLIIGPGGKNIKAITAATGASVDIEDSGRVSIFAPTAEALEKAREMV). Residues 630 to 704 (GKNYNAKVRK…SRKAVLLEEQ (75 aa)) enclose the S1 motif domain. The tract at residues 702 to 743 (EEQGHPWNPEDTARPQRSDRGDRGDRRGDRGGRDRRDRGDRR) is disordered. Positions 712 to 743 (DTARPQRSDRGDRGDRRGDRGGRDRRDRGDRR) are enriched in basic and acidic residues.

Belongs to the polyribonucleotide nucleotidyltransferase family. Mg(2+) is required as a cofactor.

The protein resides in the cytoplasm. The enzyme catalyses RNA(n+1) + phosphate = RNA(n) + a ribonucleoside 5'-diphosphate. In terms of biological role, involved in mRNA degradation. Catalyzes the phosphorolysis of single-stranded polyribonucleotides processively in the 3'- to 5'-direction. The protein is Polyribonucleotide nucleotidyltransferase of Desulfovibrio desulfuricans (strain ATCC 27774 / DSM 6949 / MB).